Consider the following 453-residue polypeptide: Alpha-galacturonidase (453 aa).

NAD(+) is bound at residue I11–S72. N151 serves as a coordination point for substrate. C173 is a Mn(2+) binding site. The active-site Proton donor is the H174. Residue H209 coordinates Mn(2+).

It belongs to the glycosyl hydrolase 4 family. In terms of assembly, homotetramer. Requires NAD(+) as cofactor. It depends on Mn(2+) as a cofactor.

It carries out the reaction [(1-&gt;4)-alpha-D-galacturonosyl](n) + H2O = alpha-D-galacturonate + [(1-&gt;4)-alpha-D-galacturonosyl](n-1). Alpha-galacturonidase able to catalyze the hydrolysis of the chromogenic substrate p-nitrophenyl-alpha-D-galacturonic acid (pNPalphaGalUA). It is probable that alpha-1,4-di-galacturonate (GalUA(2)) is the naturally occurring substrate. This Thermoanaerobacter italicus (strain DSM 9252 / Ab9) protein is Alpha-galacturonidase.